The sequence spans 270 residues: Sulfur carrier protein FdhD (270 aa).

Residue Cys116 is the Cysteine persulfide intermediate of the active site. 253 to 258 (FAREGK) lines the Mo-bis(molybdopterin guanine dinucleotide) pocket.

Belongs to the FdhD family.

Its subcellular location is the cytoplasm. Its function is as follows. Required for formate dehydrogenase (FDH) activity. Acts as a sulfur carrier protein that transfers sulfur from IscS to the molybdenum cofactor prior to its insertion into FDH. This chain is Sulfur carrier protein FdhD, found in Haemophilus influenzae (strain 86-028NP).